Reading from the N-terminus, the 183-residue chain is Peptidyl-tRNA hydrolase (183 aa).

Residue Y14 participates in tRNA binding. The active-site Proton acceptor is the H19. Positions 60 and 62 each coordinate tRNA.

The protein belongs to the PTH family. As to quaternary structure, monomer.

It is found in the cytoplasm. It carries out the reaction an N-acyl-L-alpha-aminoacyl-tRNA + H2O = an N-acyl-L-amino acid + a tRNA + H(+). In terms of biological role, hydrolyzes ribosome-free peptidyl-tRNAs (with 1 or more amino acids incorporated), which drop off the ribosome during protein synthesis, or as a result of ribosome stalling. Functionally, catalyzes the release of premature peptidyl moieties from peptidyl-tRNA molecules trapped in stalled 50S ribosomal subunits, and thus maintains levels of free tRNAs and 50S ribosomes. The protein is Peptidyl-tRNA hydrolase of Mycoplasmoides gallisepticum (strain R(low / passage 15 / clone 2)) (Mycoplasma gallisepticum).